Reading from the N-terminus, the 100-residue chain is Large ribosomal subunit protein uL23 (100 aa).

This sequence belongs to the universal ribosomal protein uL23 family. In terms of assembly, part of the 50S ribosomal subunit. Contacts protein L29, and trigger factor when it is bound to the ribosome.

In terms of biological role, one of the early assembly proteins it binds 23S rRNA. One of the proteins that surrounds the polypeptide exit tunnel on the outside of the ribosome. Forms the main docking site for trigger factor binding to the ribosome. This chain is Large ribosomal subunit protein uL23, found in Synechococcus elongatus (strain ATCC 33912 / PCC 7942 / FACHB-805) (Anacystis nidulans R2).